The sequence spans 397 residues: Probable inactive purple acid phosphatase 28 (397 aa).

The N-terminal stretch at 1-30 (MNCSIGNWKHTVLYLTLIVSLLYFIESLIS) is a signal peptide. 2 N-linked (GlcNAc...) asparagine glycosylation sites follow: Asn91 and Asn209. The Zn(2+) site is built by His266 and His314. 314-316 (HDH) contributes to the substrate binding site. His316 serves as a coordination point for Fe cation.

This sequence belongs to the metallophosphoesterase superfamily. Purple acid phosphatase family. In terms of assembly, homodimer. The cofactor is Fe cation. It depends on Zn(2+) as a cofactor. In terms of tissue distribution, expressed in roots, stems, leaves, flowers and siliques.

It is found in the secreted. The sequence is that of Probable inactive purple acid phosphatase 28 (PAP28) from Arabidopsis thaliana (Mouse-ear cress).